The sequence spans 132 residues: Agouti-signaling protein (132 aa).

Residues 1–22 form the signal peptide; that stretch reads MDVTRLLLATLLVFLCFFTVYS. Asparagine 39 is a glycosylation site (N-linked (GlcNAc...) asparagine). Residues 62 to 93 form a disordered region; sequence ISRKEAEKKRSSKKEASMKKVAQPRTPLSAPC. Basic and acidic residues predominate over residues 63 to 79; that stretch reads SRKEAEKKRSSKKEASM. 5 disulfide bridges follow: cysteine 93–cysteine 108, cysteine 100–cysteine 114, cysteine 107–cysteine 125, cysteine 111–cysteine 132, and cysteine 116–cysteine 123. Residues 93–132 enclose the Agouti domain; sequence CVATRDSCKPPAPACCDPCASCQCRFFRSACSCRVLSLNC.

It localises to the secreted. Involved in the regulation of melanogenesis. The binding of ASP to MC1R precludes alpha-MSH initiated signaling and thus blocks production of cAMP, leading to a down-regulation of eumelanogenesis (brown/black pigment) and thus increasing synthesis of pheomelanin (yellow/red pigment). The polypeptide is Agouti-signaling protein (ASIP) (Trachypithecus auratus (Javan langur)).